Reading from the N-terminus, the 223-residue chain is Endonuclease V (223 aa).

Mg(2+) contacts are provided by aspartate 45 and aspartate 113.

It belongs to the endonuclease V family. Mg(2+) is required as a cofactor.

It localises to the cytoplasm. The enzyme catalyses Endonucleolytic cleavage at apurinic or apyrimidinic sites to products with a 5'-phosphate.. Its function is as follows. DNA repair enzyme involved in the repair of deaminated bases. Selectively cleaves double-stranded DNA at the second phosphodiester bond 3' to a deoxyinosine leaving behind the intact lesion on the nicked DNA. This Dehalococcoides mccartyi (strain ATCC BAA-2100 / JCM 16839 / KCTC 5957 / BAV1) protein is Endonuclease V.